Reading from the N-terminus, the 1037-residue chain is Receptor kinase-like protein Xa21 (1037 aa).

Residues 1–24 (MARSPTSVMISSLLLLLLIGPASS) form the signal peptide. The Extracellular portion of the chain corresponds to 25 to 665 (DDAAAAAAAR…LLENRKHFPV (641 aa)). N-linked (GlcNAc...) asparagine glycosylation is found at Asn-66, Asn-101, and Asn-112. LRR repeat units follow at residues 89 to 112 (PHRVVKLLLRSSNLSGIISPSLGN), 113 to 137 (LSFLRELDLSDNYLSGEIPPELSRL), 138 to 161 (SRLQLLELSGNSIQGSIPAAIGAC), 163 to 185 (KLTSLDLSHNQLRGMIPREIGAS), 187 to 210 (KHLSNLYLHTNGLSGEIPSALGNL), 211 to 234 (TSLQYFDLSCNRLSGAIPSSLGQL), 236 to 259 (SSLLTMNLRQNNLSGMIPNSIWNL), 260 to 283 (SSLRAFSVSENKLGGMIPTNAFKT), 285 to 308 (HLLEVIDMGTNRFYGKIPASVANA), 310 to 331 (HLTQLQIDGNLFSGIITSGFGR), and 333 to 355 (RNLTTLYLWRNLFQTREQEDWGF). Asn-209 carries N-linked (GlcNAc...) asparagine glycosylation. N-linked (GlcNAc...) asparagine glycans are attached at residues Asn-247 and Asn-258. N-linked (GlcNAc...) asparagine glycosylation is present at Asn-307. Residues Asn-334, Asn-361, and Asn-385 are each glycosylated (N-linked (GlcNAc...) asparagine). LRR repeat units follow at residues 362-385 (CSKLQTLDLGENNLGGVLPNSFSN), 387-411 (STSLSFLALDLNKITGSIPKDIGNL), 412-435 (IGLQHLYLCNNNFRGSLPSSLGRL), 437-459 (NLGILVAYENNLSGSIPLAIGNL), 460-482 (TELNILLLGTNKFSGWIPYTLSN), 483-507 (LTNLLSLGLSTNNLSGPIPSELFNI), 509-532 (TLSIMINVSKNNLEGSIPQEIGHL), 533-556 (KNLVEFHAESNRLSGKIPNTLGDC), 557-580 (QLLRYLYLQNNLLSGSIPSALGQL), 581-604 (KGLETLDLSSNNLSGQIPTSLADI), and 606-629 (MLHSLNLSFNSFMGEVPTIGAFAD). N-linked (GlcNAc...) asparagine glycans are attached at residues Asn-447, Asn-458, Asn-482, Asn-495, and Asn-515. Asn-592 and Asn-611 each carry an N-linked (GlcNAc...) asparagine glycan. A helical membrane pass occupies residues 666-686 (LPISVSLVAALAILSSLYLLI). Residues 687 to 1037 (TWHKRTKKGA…PVCEGASLEF (351 aa)) lie on the Cytoplasmic side of the membrane. Positions 689-694 (HKRTKK) match the Nuclear localization signal motif. Position 698 is a phosphoserine (Ser-698). Thr-700 carries the phosphothreonine modification. Phosphoserine is present on Ser-701. Thr-717 is modified (phosphothreonine). The 300-residue stretch at 720 to 1019 (FAPTNLLGSG…GDIIDELNAI (300 aa)) folds into the Protein kinase domain. ATP-binding positions include 726–734 (LGSGSFGSV) and Lys-748. Residue Asp-854 is the Proton acceptor of the active site.

It belongs to the protein kinase superfamily. Ser/Thr protein kinase family. As to quaternary structure, interacts with WRKY62/XB10 in the nucleus. Interacts with SERK2. It depends on Mn(2+) as a cofactor. Requires Mg(2+) as cofactor. Undergoes protein cleavage upon X.oryzae pv. oryzae protein Ax21 detection, thus releasing the processed protein kinase Xa21 chain. In terms of processing, autophosphorylated on serine and threonine residues; these phosphorylation prevents proteolytic degradation.

It localises to the cell membrane. The protein resides in the endoplasmic reticulum membrane. It is found in the nucleus. It catalyses the reaction L-seryl-[protein] + ATP = O-phospho-L-seryl-[protein] + ADP + H(+). The catalysed reaction is L-threonyl-[protein] + ATP = O-phospho-L-threonyl-[protein] + ADP + H(+). In terms of biological role, receptor kinase that detects X.oryzae pv. oryzae protein Ax21 to promote innate immunity. Following X.oryzae pv. oryzae protein Ax21 detection, undergoes cleavage, releasing the processed protein kinase Xa21 chain. The processed protein kinase Xa21 chain released by protein cleavage after X.oryzae pv. oryzae protein Ax21 detection translocates into the nucleus where it can bind and regulate WRKY62, a transcription factor. Confers resistance to the bacterial pathogen X.oryzae pv. oryzae (Xoo). In Oryza sativa subsp. japonica (Rice), this protein is Receptor kinase-like protein Xa21.